Reading from the N-terminus, the 156-residue chain is Snaclec A14 (156 aa).

Positions 1–23 (MGRFIFVRVGLLVVFLSLSGTGA) are cleaved as a signal peptide. Intrachain disulfides connect Cys-27–Cys-38, Cys-55–Cys-152, and Cys-127–Cys-144. Residues 34–153 (YDQHCYKAFD…CGDDYPFVCK (120 aa)) form the C-type lectin domain. Asn-141 is a glycosylation site (N-linked (GlcNAc...) asparagine).

It belongs to the snaclec family. Heterodimer; disulfide-linked. As to expression, expressed by the venom gland.

The protein resides in the secreted. Functionally, interferes with one step of hemostasis (modulation of platelet aggregation, or coagulation cascade, for example). This Macrovipera lebetinus (Levantine viper) protein is Snaclec A14.